The chain runs to 431 residues: Acetylornithine aminotransferase (431 aa).

Pyridoxal 5'-phosphate is bound by residues 118–119 (GA) and Phe157. Arg160 contributes to the N(2)-acetyl-L-ornithine binding site. 251–254 (DEVQ) is a pyridoxal 5'-phosphate binding site. Lys284 bears the N6-(pyridoxal phosphate)lysine mark. Residue Ser313 coordinates N(2)-acetyl-L-ornithine. Thr314 contributes to the pyridoxal 5'-phosphate binding site.

This sequence belongs to the class-III pyridoxal-phosphate-dependent aminotransferase family. ArgD subfamily. Homodimer. The cofactor is pyridoxal 5'-phosphate.

The protein resides in the cytoplasm. It carries out the reaction N(2)-acetyl-L-ornithine + 2-oxoglutarate = N-acetyl-L-glutamate 5-semialdehyde + L-glutamate. It functions in the pathway amino-acid biosynthesis; L-arginine biosynthesis; N(2)-acetyl-L-ornithine from L-glutamate: step 4/4. The polypeptide is Acetylornithine aminotransferase (Bifidobacterium longum (strain NCC 2705)).